Consider the following 316-residue polypeptide: DNA-directed RNA polymerase III subunit RPC6 (316 aa).

Alanine 2 bears the N-acetylalanine mark. Residues lysine 5 and lysine 7 each participate in a glycyl lysine isopeptide (Lys-Gly) (interchain with G-Cter in SUMO2) cross-link. [4Fe-4S] cluster is bound by residues cysteine 287, cysteine 290, cysteine 296, and cysteine 307.

The protein belongs to the eukaryotic RPC34/RPC39 RNA polymerase subunit family. As to quaternary structure, component of the RNA polymerase III complex consisting of 17 subunits: a ten-subunit horseshoe-shaped catalytic core composed of POLR3A/RPC1, POLR3B/RPC2, POLR1C/RPAC1, POLR1D/RPAC2, POLR3K/RPC10, POLR2E/RPABC1, POLR2F/RPABC2, POLR2H/RPABC3, POLR2K/RPABC4 and POLR2L/RPABC5; a mobile stalk composed of two subunits POLR3H/RPC8 and CRCP/RPC9, protruding from the core and functioning primarily in transcription initiation; and additional subunits homologous to general transcription factors of the RNA polymerase II machinery, POLR3C/RPC3-POLR3F/RPC6-POLR3G/RPC7 heterotrimer required for transcription initiation and POLR3D/RPC4-POLR3E/RPC5 heterodimer involved in both transcription initiation and termination. Directly interacts with POLR3C. Interacts with TBP and TFIIIB90 and GTF3C4. Interacts with MAF1. As part of the RNA polymerase III complex, interacts with PKP2.

The protein resides in the nucleus. Functionally, DNA-dependent RNA polymerase catalyzes the transcription of DNA into RNA using the four ribonucleoside triphosphates as substrates. Specific peripheric component of RNA polymerase III (Pol III) which synthesizes small non-coding RNAs including 5S rRNA, snRNAs, tRNAs and miRNAs from at least 500 distinct genomic loci. Part of POLR3C/RPC3-POLR3F/RPC6-POLR3G/RPC7 heterotrimer that coordinates the dynamics of Pol III stalk and clamp modules during the transition from apo to elongation state. Pol III plays a key role in sensing and limiting infection by intracellular bacteria and DNA viruses, including varicella zoster virus. Acts as a nuclear and cytosolic DNA sensor detecting AT-rich DNA, involved in innate immune response. Can sense non-self dsDNA that serves as template for transcription into dsRNA. The non-self RNA polymerase III transcripts, such as Epstein-Barr virus-encoded RNAs (EBERs) induce type I interferon and NF-kappa-B through the RIG-I pathway. Preferentially binds double-stranded DNA (dsDNA). The polypeptide is DNA-directed RNA polymerase III subunit RPC6 (Mus musculus (Mouse)).